The chain runs to 633 residues: Pollen receptor-like kinase 3 (633 aa).

The signal sequence occupies residues 1–19 (MTAVLFLCFLLICFSFTPS). N-linked (GlcNAc...) asparagine glycans are attached at residues Asn22 and Asn37. A disulfide bond links Cys53 and Cys62. LRR repeat units follow at residues 90–115 (LPNL…KLPG), 117–137 (KSLL…FFKE), 138–162 (TPQL…LMQL), 163–186 (AGLE…TDGN), and 188–210 (VLKS…ISDR). N-linked (GlcNAc...) asparagine glycosylation occurs at Asn123. Cys224 and Cys232 form a disulfide bridge. Asn246 carries N-linked (GlcNAc...) asparagine glycosylation. The chain crosses the membrane as a helical span at residues 249 to 269 (AKAIFMVILFLLIFLFVVAII). Residues 294–314 (VEVRVPDSIKKPIDSSKKRSN) are compositionally biased toward basic and acidic residues. The interval 294–339 (VEVRVPDSIKKPIDSSKKRSNAEGSSKKGSSHNGKGAGGGPGSGMG) is disordered. Residues 328–338 (KGAGGGPGSGM) are compositionally biased toward gly residues. A Protein kinase domain is found at 358-633 (KAAAEVLGNG…IVRRIERVTL (276 aa)). ATP is bound by residues 364–372 (LGNGSLGSA) and Lys386. Ser438 carries the post-translational modification Phosphoserine. The residue at position 458 (Thr458) is a Phosphothreonine. Ser535 carries the phosphoserine modification.

It belongs to the protein kinase superfamily. Ser/Thr protein kinase family. In terms of assembly, interacts in vitro with ROPGEF1 (via PRONE domain). Interacts with PRK6. Expressed in pollen and/or in flowers, but not in leaves.

The protein resides in the membrane. The catalysed reaction is L-seryl-[protein] + ATP = O-phospho-L-seryl-[protein] + ADP + H(+). It carries out the reaction L-threonyl-[protein] + ATP = O-phospho-L-threonyl-[protein] + ADP + H(+). The phosphorylation activity is calcium-independent. In terms of biological role, receptor-like kinase involved in the control of pollen germination and pollen tube polar growth. Can phosphorylate ROPGEF1 in vitro. This is Pollen receptor-like kinase 3 from Arabidopsis thaliana (Mouse-ear cress).